The following is a 239-amino-acid chain: MGKSLIQQRRGKGSPTFRSPSHRFRGAVKYIPLNYTQDKTLRGVVEEIMHDPGRTAPVARVRFENGMEKLIIAPEGLLVGQEIYIGPDAPIAIGNTLPLAKIPEGTYVYNIEGIPGDGGKYVRAGGTYALVVSREKDKVIVQLPSGELKAFNPNCRATIGVVAGGGRLEKPLVKAGKAYYKYKARNRFWPTPRGVKMNAVNHPFGGKEHHPGKPTTTSRRAPPGRKVGHIAARRTGRRK.

Residues 203-239 (PFGGKEHHPGKPTTTSRRAPPGRKVGHIAARRTGRRK) form a disordered region. A compositionally biased stretch (basic residues) spans 222-239 (PPGRKVGHIAARRTGRRK).

Belongs to the universal ribosomal protein uL2 family. In terms of assembly, part of the 50S ribosomal subunit. Forms a bridge to the 30S subunit in the 70S ribosome.

Its function is as follows. One of the primary rRNA binding proteins. Required for association of the 30S and 50S subunits to form the 70S ribosome, for tRNA binding and peptide bond formation. It has been suggested to have peptidyltransferase activity; this is somewhat controversial. Makes several contacts with the 16S rRNA in the 70S ribosome. The sequence is that of Large ribosomal subunit protein uL2 from Pyrococcus abyssi (strain GE5 / Orsay).